An 89-amino-acid polypeptide reads, in one-letter code: Putative sodium channel toxin Ts30 (89 aa).

Positions Met-1–Ala-17 are cleaved as a signal peptide. Residues Arg-21–His-85 form the LCN-type CS-alpha/beta domain. 4 disulfide bridges follow: Cys-31/Cys-84, Cys-35/Cys-59, Cys-44/Cys-64, and Cys-48/Cys-66.

Expressed by the venom gland.

Its subcellular location is the secreted. In Tityus serrulatus (Brazilian scorpion), this protein is Putative sodium channel toxin Ts30.